The sequence spans 276 residues: uncharacterized protein (276 aa).

Residues 20-137 form the AB hydrolase-1 domain; that stretch reads PVLIFIPGAN…PPINTFLPDS (118 aa). The disordered stretch occupies residues 57 to 76; it reads GESELTEPLPDSASNPDSDY.

It belongs to the AB hydrolase superfamily.

This is an uncharacterized protein from Staphylococcus aureus (strain COL).